Reading from the N-terminus, the 145-residue chain is Protein cornichon homolog 1 (145 aa).

The next 3 membrane-spanning stretches (helical) occupy residues 5–25, 57–77, and 116–136; these read FAAFCYLLALIAVGFCIFFAI, IIHGTFTVLFIFSWQLISILA, and LRISWIKLAFYLVSFFYYLYA.

The protein belongs to the cornichon family. As to quaternary structure, interacts with glr-1. As to expression, widely expressed in the nervous system including in the AVA interneurons.

It is found in the endoplasmic reticulum membrane. The protein resides in the synapse. Its subcellular location is the cell projection. The protein localises to the dendrite. In terms of biological role, negatively regulates export of glr-1 from the endoplasmic reticulum to synapses. In Caenorhabditis elegans, this protein is Protein cornichon homolog 1.